A 936-amino-acid polypeptide reads, in one-letter code: UPF0746 protein DDB_G0280787 (936 aa).

Over residues 1 to 19 the composition is skewed to basic and acidic residues; that stretch reads MISNKRKEIDTIDGHHEKD. The disordered stretch occupies residues 1–30; the sequence is MISNKRKEIDTIDGHHEKDNDDDDSDGIDN. The region spanning 44 to 78 is the SAP domain; it reads SGSTNYRELQIIAKSLGLASNGKKQLVYNRIEGYF. The disordered stretch occupies residues 91 to 110; that stretch reads ETNQQEEKKEEEQQQPQPQE.

The protein belongs to the UPF0746 family.

The protein is UPF0746 protein DDB_G0280787 of Dictyostelium discoideum (Social amoeba).